Here is a 708-residue protein sequence, read N- to C-terminus: Retrotransposon-derived protein PEG10 (708 aa).

Residues 1–50 (MTERRRDELSEEINNLREKVMKQSEENNNLQSQVQKLTEENTTLREQVEP) are a coiled coil. Residues 21 to 74 (MKQSEENNNLQSQVQKLTEENTTLREQVEPTPEDEDDDIELRGAAAAAAPPPPI) are disordered. Residues 26-36 (ENNNLQSQVQK) show a composition bias toward polar residues. Over residues 37 to 48 (LTEENTTLREQV) the composition is skewed to basic and acidic residues. Positions 76–275 (EECPEDLPEK…HQVDPTEPVG (200 aa)) are necessary for interaction with ACVRL1. Residues 293-310 (NLCLYCGTGGHYADNCPA) form a CCHC-type zinc finger. The disordered stretch occupies residues 310-344 (AKASKSSPAGKLPGPAVEGPSATGPEIIRSPQDDA). Glycyl lysine isopeptide (Lys-Gly) (interchain with G-Cter in ubiquitin) cross-links involve residues K311 and K314. Phosphoserine occurs at positions 316 and 321. Residues R507, R598, and R611 each carry the omega-N-methylarginine modification. The disordered stretch occupies residues 683-708 (PVPQYPPPQPPPPPPPPPPPPSYSTL).

Homooligomer; homooligomerizes into virion-like capsids. Interacts with ACVRL1. Interacts with SIAH1 and SIAH2. Undergoes proteolytic cleavage. In terms of tissue distribution, expressed in the cytotrophoblast layer but not in the overlying syncytiotrophoblast of the placenta. Expressed in prostate and breast carcinomas but not in normal breast and prostate epithelial cells. Expressed in the Hep-G2 cell line (at protein level). Expressed in brain, liver, spleen, kidney, thymus, lung, ovary, testis, reactive lymph node, skeletal muscle, adipose tissue and placenta. Expressed in pancreatic and hepatocellular carcinomas (HCC).

The protein localises to the extracellular vesicle membrane. It is found in the cytoplasm. It localises to the nucleus. Functionally, retrotransposon-derived protein that binds its own mRNA and self-assembles into virion-like capsids. Forms virion-like extracellular vesicles that encapsulate their own mRNA and are released from cells, enabling intercellular transfer of PEG10 mRNA. Binds its own mRNA in the 5'-UTR region, in the region near the boundary between the nucleocapsid (NC) and protease (PRO) coding sequences and in the beginning of the 3'-UTR region. Involved in placenta formation: required for trophoblast stem cells differentiation. Involved at the immediate early stage of adipocyte differentiation. Overexpressed in many cancers and enhances tumor progression: promotes cell proliferation by driving cell cycle progression from G0/G1. Enhances cancer progression by inhibiting the TGF-beta signaling, possibly via interaction with the TGF-beta receptor ACVRL1. May bind to the 5'-GCCTGTCTTT-3' DNA sequence of the MB1 domain in the myelin basic protein (MBP) promoter; additional evidences are however required to confirm this result. This Homo sapiens (Human) protein is Retrotransposon-derived protein PEG10.